A 231-amino-acid chain; its full sequence is Small ribosomal subunit protein uS3 (231 aa).

In terms of domain architecture, KH type-2 spans 39–107 (IRKFIKEKLF…QVSVNIVEIK (69 aa)).

Belongs to the universal ribosomal protein uS3 family. In terms of assembly, part of the 30S ribosomal subunit. Forms a tight complex with proteins S10 and S14.

Functionally, binds the lower part of the 30S subunit head. Binds mRNA in the 70S ribosome, positioning it for translation. The chain is Small ribosomal subunit protein uS3 from Pelotomaculum thermopropionicum (strain DSM 13744 / JCM 10971 / SI).